The primary structure comprises 441 residues: MSDFSQTVPELVAWARKNDFSISLPTERLAFLMAIATLNGERMDGEMSEGELIDAFRHVSQGFDQTSETITIRANNAINDLVRQRLLNRFTSEQAEGNAIYRLTPLGIGITDYYIRQREFSTLRLSMQLSIVAQELSRAADAAEEDGDEFHWHRNVFAPLKYSVAEIFDSIDLSQRVMDEQQQGVKDDIAALLNQDWRAAISSCEQLLTETSSTLRELQDTLEAAGDKLQTSLLSIQDTIMNNPHNLEFVDKLVFDLQNKLDRIVSWGQQTIDLWIGYDRHVHKFIRTAIDMDKNRVFAQRLRQSVQSYFDNPWALTFANADRLLDMRDEELTLRSEEVTGELPPELEYEEFSEMREQLIALVEQALHKYKAQQIPLDLSEVMREYLAQYPRSRHFDVARIVVDQAVRLGVADTDFTGLPALWQAINEYGAKVQAHVIDKY.

Positions 208–236 are leucine-zipper; that stretch reads LTETSSTLRELQDTLEAAGDKLQTSLLSI.

The protein belongs to the MukF family. Interacts, and probably forms a ternary complex, with MukE and MukB via its C-terminal region. The complex formation is stimulated by calcium or magnesium. It is required for an interaction between MukE and MukB.

The protein resides in the cytoplasm. It localises to the nucleoid. In terms of biological role, involved in chromosome condensation, segregation and cell cycle progression. May participate in facilitating chromosome segregation by condensation DNA from both sides of a centrally located replisome during cell division. Not required for mini-F plasmid partitioning. Probably acts via its interaction with MukB and MukE. Overexpression results in anucleate cells. It has a calcium binding activity. This Pectobacterium atrosepticum (strain SCRI 1043 / ATCC BAA-672) (Erwinia carotovora subsp. atroseptica) protein is Chromosome partition protein MukF.